A 21-amino-acid chain; its full sequence is Cupiennin-6c (21 aa).

Position 21 is a serine amide (serine 21).

As to expression, expressed by the venom gland.

It localises to the secreted. The protein is Cupiennin-6c of Cupiennius salei (American wandering spider).